A 642-amino-acid polypeptide reads, in one-letter code: Glutamyl-tRNA(Gln) amidotransferase subunit E (642 aa).

Belongs to the GatB/GatE family. GatE subfamily. As to quaternary structure, heterodimer of GatD and GatE.

It catalyses the reaction L-glutamyl-tRNA(Gln) + L-glutamine + ATP + H2O = L-glutaminyl-tRNA(Gln) + L-glutamate + ADP + phosphate + H(+). Functionally, allows the formation of correctly charged Gln-tRNA(Gln) through the transamidation of misacylated Glu-tRNA(Gln) in organisms which lack glutaminyl-tRNA synthetase. The reaction takes place in the presence of glutamine and ATP through an activated gamma-phospho-Glu-tRNA(Gln). The GatDE system is specific for glutamate and does not act on aspartate. The protein is Glutamyl-tRNA(Gln) amidotransferase subunit E of Aeropyrum pernix (strain ATCC 700893 / DSM 11879 / JCM 9820 / NBRC 100138 / K1).